A 194-amino-acid chain; its full sequence is HTH-type transcriptional regulator BetI (194 aa).

The HTH tetR-type domain maps to 8 to 68; sequence EIRRAQLIDA…ATMRHVLRDL (61 aa). The segment at residues 31-50 is a DNA-binding region (H-T-H motif); it reads TLASVAQRANISTGIVSHYF.

Its pathway is amine and polyamine biosynthesis; betaine biosynthesis via choline pathway [regulation]. Functionally, repressor involved in the biosynthesis of the osmoprotectant glycine betaine. It represses transcription of the choline transporter BetT and the genes of BetAB involved in the synthesis of glycine betaine. This is HTH-type transcriptional regulator BetI from Burkholderia lata (strain ATCC 17760 / DSM 23089 / LMG 22485 / NCIMB 9086 / R18194 / 383).